A 180-amino-acid polypeptide reads, in one-letter code: ATP synthase subunit delta (180 aa).

Belongs to the ATPase delta chain family. As to quaternary structure, F-type ATPases have 2 components, F(1) - the catalytic core - and F(0) - the membrane proton channel. F(1) has five subunits: alpha(3), beta(3), gamma(1), delta(1), epsilon(1). F(0) has three main subunits: a(1), b(2) and c(10-14). The alpha and beta chains form an alternating ring which encloses part of the gamma chain. F(1) is attached to F(0) by a central stalk formed by the gamma and epsilon chains, while a peripheral stalk is formed by the delta and b chains.

It localises to the cell membrane. Its function is as follows. F(1)F(0) ATP synthase produces ATP from ADP in the presence of a proton or sodium gradient. F-type ATPases consist of two structural domains, F(1) containing the extramembraneous catalytic core and F(0) containing the membrane proton channel, linked together by a central stalk and a peripheral stalk. During catalysis, ATP synthesis in the catalytic domain of F(1) is coupled via a rotary mechanism of the central stalk subunits to proton translocation. Functionally, this protein is part of the stalk that links CF(0) to CF(1). It either transmits conformational changes from CF(0) to CF(1) or is implicated in proton conduction. The chain is ATP synthase subunit delta from Ligilactobacillus salivarius (strain UCC118) (Lactobacillus salivarius).